A 735-amino-acid polypeptide reads, in one-letter code: Catalase-peroxidase (735 aa).

A disordered region spans residues 1–31; sequence MENNTNPISGQGKCPFSGGAAKQSAGAGTRN. The segment covering 17–28 has biased composition (low complexity); that stretch reads SGGAAKQSAGAG. The tryptophyl-tyrosyl-methioninium (Trp-Tyr) (with M-252) cross-link spans 103-226; it reads WHSAGTYRVA…LAAVQMGLIY (124 aa). His104 functions as the Proton acceptor in the catalytic mechanism. Residues 226–252 constitute a cross-link (tryptophyl-tyrosyl-methioninium (Tyr-Met) (with W-103)); it reads YVNPEGPNGNPDPLASARDIRETFARM. His267 contributes to the heme b binding site. The segment at 352 to 371 is disordered; sequence KPKNGAGAGTVPDAHNSSKS.

This sequence belongs to the peroxidase family. Peroxidase/catalase subfamily. As to quaternary structure, homodimer or homotetramer. Heme b serves as cofactor. In terms of processing, formation of the three residue Trp-Tyr-Met cross-link is important for the catalase, but not the peroxidase activity of the enzyme.

The catalysed reaction is H2O2 + AH2 = A + 2 H2O. It catalyses the reaction 2 H2O2 = O2 + 2 H2O. In terms of biological role, bifunctional enzyme with both catalase and broad-spectrum peroxidase activity. The polypeptide is Catalase-peroxidase (Flavobacterium psychrophilum (strain ATCC 49511 / DSM 21280 / CIP 103535 / JIP02/86)).